The sequence spans 338 residues: Ribosomal RNA small subunit methyltransferase H (338 aa).

Residues 53 to 55 (GGH), aspartate 72, tyrosine 99, aspartate 123, and glutamine 130 contribute to the S-adenosyl-L-methionine site. 2 disordered regions span residues 276 to 297 (EITPRSKSKSPEGLPVELPGMG) and 304 to 323 (TRGAERASEQEVEENPRSAP).

The protein belongs to the methyltransferase superfamily. RsmH family.

The protein resides in the cytoplasm. The catalysed reaction is cytidine(1402) in 16S rRNA + S-adenosyl-L-methionine = N(4)-methylcytidine(1402) in 16S rRNA + S-adenosyl-L-homocysteine + H(+). Its function is as follows. Specifically methylates the N4 position of cytidine in position 1402 (C1402) of 16S rRNA. The polypeptide is Ribosomal RNA small subunit methyltransferase H (Rhodococcus jostii (strain RHA1)).